The following is a 151-amino-acid chain: Arginine repressor (151 aa).

It belongs to the ArgR family.

Its subcellular location is the cytoplasm. It participates in amino-acid biosynthesis; L-arginine biosynthesis [regulation]. Its function is as follows. Regulates arginine biosynthesis genes. This is Arginine repressor from Pelotomaculum thermopropionicum (strain DSM 13744 / JCM 10971 / SI).